A 358-amino-acid polypeptide reads, in one-letter code: Aromatic amino acid aminotransferase (358 aa).

Lys214 carries the N6-(pyridoxal phosphate)lysine modification.

The protein belongs to the class-II pyridoxal-phosphate-dependent aminotransferase family. Homodimer. Pyridoxal 5'-phosphate serves as cofactor.

The catalysed reaction is an aromatic L-alpha-amino acid + 2-oxoglutarate = an aromatic oxo-acid + L-glutamate. In terms of biological role, aminotransferase that catalyzes the conversion of aromatic amino acids and 2-oxoglutarate into corresponding aromatic oxo acids and L-glutamate. This Rhodococcus jostii (strain RHA1) protein is Aromatic amino acid aminotransferase.